We begin with the raw amino-acid sequence, 128 residues long: 3-aminoacrylate deaminase RutC (128 aa).

It belongs to the RutC family.

The catalysed reaction is (Z)-3-aminoacrylate + H2O + H(+) = 3-oxopropanoate + NH4(+). Functionally, involved in pyrimidine catabolism. Catalyzes the deamination of 3-aminoacrylate to malonic semialdehyde, a reaction that can also occur spontaneously. RutC may facilitate the reaction and modulate the metabolic fitness, rather than catalyzing essential functions. This Pantoea ananatis (strain LMG 20103) protein is 3-aminoacrylate deaminase RutC.